Reading from the N-terminus, the 1311-residue chain is Zinc finger protein 423 (1311 aa).

A compositionally biased stretch (basic residues) spans 1 to 11 (MSRRKQAKPRS). Disordered regions lie at residues 1–21 (MSRR…EASD), 34–70 (GGLE…EDVE), and 95–123 (AHRC…VASP). Basic and acidic residues predominate over residues 41–54 (ECDRKSSRALEDRN). Ser-55 and Ser-58 each carry phosphoserine. A C2H2-type 1; degenerate zinc finger spans residues 75–101 (YTCDHCQQDFESLADLTDHRAHRCPGD). Polar residues predominate over residues 110 to 123 (WVASSPSSKDVASP). 7 C2H2-type zinc fingers span residues 146 to 168 (YPCQ…EQIH), 174 to 196 (FKCT…IKLH), 202 to 224 (YHCH…LKTH), 230 to 252 (FKCS…MQAH), 271 to 294 (FMCD…LTLH), 303 to 326 (LQCI…HQAH), and 331 to 353 (HKCP…LDSH). Positions 354-426 (RQPDSSNHSV…PLRGQKKMRD (73 aa)) are disordered. A compositionally biased stretch (polar residues) spans 373 to 382 (ASMSSATPDS). Residues 390 to 404 (SVASMSSATPDSSAS) are compositionally biased toward low complexity. A C2H2-type 9; degenerate zinc finger spans residues 436–460 (YSCPYCSKRDFTSLAVLEIHLKTIH). 3 consecutive C2H2-type zinc fingers follow at residues 468–491 (HTCQ…RKLH), 507–530 (FHCN…RVSH), and 544–567 (FFCN…QQAH). The C2H2-type 13; atypical zinc-finger motif lies at 590–615 (YSCPYCTNSPIFGSILKLTKHIKENH). A disordered region spans residues 617–654 (NIPLAHSKKSKAEQSPVSSDVEVSSPKRQRLSGSANSI). Ser-631 carries the post-translational modification Phosphoserine. Positions 631-642 (SPVSSDVEVSSP) are enriched in low complexity. 7 C2H2-type zinc fingers span residues 659 to 681 (YPCN…LKLH), 689 to 711 (QACP…LTVH), 719 to 742 (YVCE…LDMH), 747 to 770 (YHCT…AVKH), 777 to 800 (YRCT…KHSH), 808 to 830 (HKCI…ITTH), and 834 to 857 (YNCR…REKH). The segment at 913–935 (YGCDICGAAYTMEVLLQNHRLRD) adopts a C2H2-type 21; degenerate zinc-finger fold. C2H2-type zinc fingers lie at residues 957–979 (HKCN…LQTH), 986–1008 (YMCP…KVTH), and 1047–1069 (FRCV…GTFH). Ser-1081 bears the Phosphoserine mark. The C2H2-type 25; degenerate zinc-finger motif lies at 1091-1109 (YKCALCLKEFRSKQDLVRL). 5 consecutive C2H2-type zinc fingers follow at residues 1147–1170 (LRCP…QVDH), 1195–1217 (YQCI…VANH), 1225–1247 (HECK…LIEH), 1256–1279 (FKCP…FAVH), and 1286–1309 (YDCS…MSQH). Positions 1163-1174 (ESHMQVDHRDLT) are enriched in basic and acidic residues. The interval 1163–1190 (ESHMQVDHRDLTPETSGPRKGAQTSPVP) is disordered.

Belongs to the krueppel C2H2-type zinc-finger protein family. As to quaternary structure, homodimer. Interacts with PARP1, SMAD1 and SMAD4. Interacts with EBF1. Interacts with CEP290. In terms of tissue distribution, expressed in brain, eye, olfactory epithelium, spleen and heart. Expressed in the basal layer, consisting of neural precursor cells and immature sensory neurons of the olfactory epithelium, but not in the mature receptor cells.

It localises to the nucleus. Functionally, transcription factor that can both act as an activator or a repressor depending on the context. Plays a central role in BMP signaling and olfactory neurogenesis. Associates with SMADs in response to BMP2 leading to activate transcription of BMP target genes. Acts as a transcriptional repressor via its interaction with EBF1, a transcription factor involved in terminal olfactory receptor neurons differentiation; this interaction preventing EBF1 to bind DNA and activate olfactory-specific genes. Involved in olfactory neurogenesis by participating in a developmental switch that regulates the transition from differentiation to maturation in olfactory receptor neurons. Controls proliferation and differentiation of neural precursors in cerebellar vermis formation. This is Zinc finger protein 423 (Znf423) from Rattus norvegicus (Rat).